Consider the following 121-residue polypeptide: Large ribosomal subunit protein uL22c (121 aa).

The protein belongs to the universal ribosomal protein uL22 family. In terms of assembly, part of the 50S ribosomal subunit.

It localises to the plastid. It is found in the chloroplast. This protein binds specifically to 23S rRNA. Functionally, the globular domain of the protein is located near the polypeptide exit tunnel on the outside of the subunit, while an extended beta-hairpin is found that lines the wall of the exit tunnel in the center of the 70S ribosome. This Welwitschia mirabilis (Tree tumbo) protein is Large ribosomal subunit protein uL22c (rpl22).